A 272-amino-acid polypeptide reads, in one-letter code: Phosphate import ATP-binding protein PstB (272 aa).

The ABC transporter domain occupies 18–257; it reads VSMQNVTISY…FNDTQSIFNS (240 aa). Position 50-57 (50-57) interacts with ATP; sequence GPSGCGKS.

The protein belongs to the ABC transporter superfamily. Phosphate importer (TC 3.A.1.7) family. As to quaternary structure, the complex is composed of two ATP-binding proteins (PstB), two transmembrane proteins (PstC and PstA) and a solute-binding protein (PstS).

The protein localises to the cell inner membrane. The enzyme catalyses phosphate(out) + ATP + H2O = ADP + 2 phosphate(in) + H(+). Functionally, part of the ABC transporter complex PstSACB involved in phosphate import. Responsible for energy coupling to the transport system. This chain is Phosphate import ATP-binding protein PstB, found in Synechococcus sp. (strain CC9902).